The following is an 898-amino-acid chain: Sodium/hydrogen exchanger 5 (898 aa).

The Cytoplasmic portion of the chain corresponds to 1–3; that stretch reads MLR. Residues 4-24 form a helical membrane-spanning segment; that stretch reads VALLLLPGLPLAGVGATEEPT. Residues 25–47 are Extracellular-facing; sequence QEPGPLGEPPGLALFRWQWHEVE. A helical transmembrane segment spans residues 48 to 68; sequence APYLVALWILVASLAKIVFHL. Residues 69–75 are Cytoplasmic-facing; that stretch reads SRKVTSL. The chain crosses the membrane as a helical span at residues 76–96; that stretch reads VPESCLLILLGLALGGIVLAV. The Extracellular portion of the chain corresponds to 97 to 136; it reads AKKAEYQLEPGTFFLFLLPPIVLDSGYFMPSRLFFDNLGA. The helical transmembrane segment at 137–157 threads the bilayer; it reads ILTYAVVGTLWNAFTTGVALW. Residues 158 to 175 lie on the Cytoplasmic side of the membrane; the sequence is GLQQAGLVAPRVQAGLLD. Residues 176-196 form a helical membrane-spanning segment; that stretch reads FLLFGSLISAVDPVAVLAVFE. Residues 197-202 are Extracellular-facing; it reads EVHVNE. Asparagine 201 carries an N-linked (GlcNAc...) asparagine glycan. The helical transmembrane segment at 203-223 threads the bilayer; that stretch reads TLFIIVFGESLLNDAVTVVLY. Residues 224–248 are Cytoplasmic-facing; sequence KVCNSFVEMGSANVQATDYLKGVAS. Residues 249–269 form a helical membrane-spanning segment; that stretch reads LFVVSLGGAAVGLVFAFLLAL. Topologically, residues 270–278 are extracellular; that stretch reads TTRFTKRVR. The chain crosses the membrane as a helical span at residues 279-299; the sequence is IIEPLLVFLLAYAAYLTAEMA. Residues 300 to 333 lie on the Cytoplasmic side of the membrane; it reads SLSAILAVTMCGLGCKKYVEANISHKSRTAVKYT. The chain crosses the membrane as a helical span at residues 334–354; the sequence is MKTLASSAETVIFMLLGISAV. The Extracellular portion of the chain corresponds to 355 to 362; it reads DSSKWAWD. Residues 363-383 form a helical membrane-spanning segment; it reads SGLVLGTLFFILFFRALGVVL. Over 384–400 the chain is Cytoplasmic; the sequence is QTWVLNQFRLVPLDKID. The helical transmembrane segment at 401–421 threads the bilayer; sequence QVVMSYGGLRGAVAFALVILL. The Extracellular segment spans residues 422 to 430; it reads DRTKVPAKD. Residues 431 to 451 traverse the membrane as a helical segment; it reads YFVATTIVVVFFTVIVQGLTI. Topologically, residues 452–898 are cytoplasmic; it reads KPLVKWLRVK…CIQFNRGGRL (447 aa). Disordered stretches follow at residues 660-692 and 801-888; these read TKSKPRPRKTGHKKKDGVANPEATNGKPPRDLG and ESLA…NSHW. Residues 662 to 674 show a composition bias toward basic residues; sequence SKPRPRKTGHKKK. A compositionally biased stretch (polar residues) spans 856-867; sequence ESSADIPQQQEL.

This sequence belongs to the monovalent cation:proton antiporter 1 (CPA1) transporter (TC 2.A.36) family. Interacts with CHP1 and CHP2. Interacts with ARRB2; facilitates the endocytosis of SLC9A5 from the plasma membrane. Interacts with RACK1; this interaction positively regulates SLC9A5 activity and promotes SLC9A5 localization to focal adhesions. Interacts with SCAMP2; this interaction regulates SLC9A5 cell-surface targeting and SLC9A5 activity. Post-translationally, phosphorylated by PRKAA2; promotes its accumulation at the cell surface. Phosphorylated by CSNK2A1 in a manner favoring its beta-arrestin binding and endocytosis. Highly expressed in brain. Strongly expressed in the dentate gyrus.

The protein resides in the cell membrane. The protein localises to the recycling endosome membrane. It localises to the cell projection. It is found in the dendritic spine membrane. Its subcellular location is the synaptic cell membrane. The protein resides in the cell junction. The protein localises to the focal adhesion. It catalyses the reaction Na(+)(in) + H(+)(out) = Na(+)(out) + H(+)(in). In terms of biological role, plasma membrane Na(+)/H(+) antiporter. Mediates the electroneutral exchange of intracellular H(+) ions for extracellular Na(+) in 1:1 stoichiometry. Responsible for regulating intracellular pH homeostasis, in particular in neural tissues. Acts as a negative regulator of dendritic spine growth. Plays a role in postsynaptic remodeling and signaling. Can also contribute to organellar pH regulation, with consequences for receptor tyrosine kinase trafficking. In Rattus norvegicus (Rat), this protein is Sodium/hydrogen exchanger 5 (Slc9a5).